The following is a 367-amino-acid chain: Peroxisome biogenesis protein 16 (367 aa).

The disordered stretch occupies residues 135–173 (GGETPNEEKDSNQSESQNRAGNSGRNLGPHGLGNQNHHN). Residues 147 to 159 (QSESQNRAGNSGR) show a composition bias toward polar residues. 2 helical membrane-spanning segments follow: residues 237–257 (ALFA…VLFI) and 264–284 (SWIP…LLAN).

This sequence belongs to the peroxin-16 family. As to quaternary structure, interacts with APEM9 (via both N- and C-terminus). Post-translationally, the detection of an additional immunorelated polypeptide of 52 kDa suggests a post-translational modification of PEX16. Expressed in roots, siliques, seeds, cotyledons, leaves and flowers. Low expression in leaves and roots.

The protein localises to the peroxisome membrane. Its subcellular location is the endoplasmic reticulum membrane. In terms of biological role, involved in the formation of peroxisomes, lipid bodies and protein bodies. This chain is Peroxisome biogenesis protein 16, found in Arabidopsis thaliana (Mouse-ear cress).